The chain runs to 239 residues: Probable transcriptional regulatory protein BLi00754/BL02339 (239 aa).

This sequence belongs to the TACO1 family. YeeN subfamily.

It is found in the cytoplasm. The chain is Probable transcriptional regulatory protein BLi00754/BL02339 from Bacillus licheniformis (strain ATCC 14580 / DSM 13 / JCM 2505 / CCUG 7422 / NBRC 12200 / NCIMB 9375 / NCTC 10341 / NRRL NRS-1264 / Gibson 46).